The chain runs to 233 residues: ATP synthase subunit a, chloroplastic (233 aa).

Helical transmembrane passes span 82–102 (VPFI…GALI), 121–141 (INTT…AGIS), 177–199 (LFGN…PLIV), and 211–231 (SSIQ…EAIE).

The protein belongs to the ATPase A chain family. In terms of assembly, F-type ATPases have 2 components, CF(1) - the catalytic core - and CF(0) - the membrane proton channel. CF(1) has five subunits: alpha(3), beta(3), gamma(1), delta(1), epsilon(1). CF(0) has four main subunits: a, b, b' and c.

It localises to the plastid. The protein resides in the chloroplast thylakoid membrane. Its function is as follows. Key component of the proton channel; it plays a direct role in the translocation of protons across the membrane. The protein is ATP synthase subunit a, chloroplastic of Galdieria sulphuraria (Red alga).